The primary structure comprises 394 residues: Protein STRICTOSIDINE SYNTHASE-LIKE 1 (394 aa).

Positions 1-21 are cleaved as a signal peptide; that stretch reads MESLLLIAYAFLYLFLLSHEA. Positions 61–73 are enriched in basic and acidic residues; the sequence is GLEKRPNHSEDNP. Positions 61 to 92 are disordered; that stretch reads GLEKRPNHSEDNPPSRGWTGEPGLDPRGEGPY. 3 N-linked (GlcNAc...) asparagine glycosylation sites follow: asparagine 67, asparagine 122, and asparagine 196.

Belongs to the strictosidine synthase family.

Its subcellular location is the vacuole. The polypeptide is Protein STRICTOSIDINE SYNTHASE-LIKE 1 (Arabidopsis thaliana (Mouse-ear cress)).